The sequence spans 93 residues: UPF0728 protein C10orf53 homolog (93 aa).

It belongs to the UPF0728 family.

The protein is UPF0728 protein C10orf53 homolog of Mus musculus (Mouse).